Consider the following 39-residue polypeptide: Cytochrome b559 subunit beta (39 aa).

Residues 14 to 30 traverse the membrane as a helical segment; sequence WLAVHGLAVPTVFFLGS. His-18 is a binding site for heme.

It belongs to the PsbE/PsbF family. Heterodimer of an alpha subunit and a beta subunit. PSII is composed of 1 copy each of membrane proteins PsbA, PsbB, PsbC, PsbD, PsbE, PsbF, PsbH, PsbI, PsbJ, PsbK, PsbL, PsbM, PsbT, PsbX, PsbY, PsbZ, Psb30/Ycf12, at least 3 peripheral proteins of the oxygen-evolving complex and a large number of cofactors. It forms dimeric complexes. It depends on heme b as a cofactor.

Its subcellular location is the plastid. It localises to the chloroplast thylakoid membrane. Its function is as follows. This b-type cytochrome is tightly associated with the reaction center of photosystem II (PSII). PSII is a light-driven water:plastoquinone oxidoreductase that uses light energy to abstract electrons from H(2)O, generating O(2) and a proton gradient subsequently used for ATP formation. It consists of a core antenna complex that captures photons, and an electron transfer chain that converts photonic excitation into a charge separation. The polypeptide is Cytochrome b559 subunit beta (Gnetum gnemon (Spanish joint-fir)).